The following is a 312-amino-acid chain: MIDITLLGTGGGMPTPERNLSAAILNYKGRKILIDCGEGTQVSMKISKTGFKNIDIICITHWHGDHIVGLPGLLATMGNSGRKEPLTIIGPVGIGEIIKGLTVIVPYIPYELNVIEATKESLCFTINKENLLLSSKGEIIINTLEVEHSSPCIAYRFDVKRKPKFNLEKALDNKVPKVIWNLLQRGGNVEFEGNLYESSMVLGEERKGIKFSFVTDTLPIPELIPFVKKSDLLICESNYGQDSDVDKAIKNKHMTFSQAAQIAKSGEVKELILTHFSPAIEDPEEFIHFAKDIFPKAQIGKDRMIISIDFQN.

His-61, His-63, Asp-65, His-66, His-148, Asp-216, and His-275 together coordinate Zn(2+). Asp-65 serves as the catalytic Proton acceptor.

It belongs to the RNase Z family. Homodimer. Zn(2+) serves as cofactor.

It catalyses the reaction Endonucleolytic cleavage of RNA, removing extra 3' nucleotides from tRNA precursor, generating 3' termini of tRNAs. A 3'-hydroxy group is left at the tRNA terminus and a 5'-phosphoryl group is left at the trailer molecule.. Its function is as follows. Zinc phosphodiesterase, which displays some tRNA 3'-processing endonuclease activity. Probably involved in tRNA maturation, by removing a 3'-trailer from precursor tRNA. This Clostridium tetani (strain Massachusetts / E88) protein is Ribonuclease Z.